A 289-amino-acid chain; its full sequence is Oxaloacetate decarboxylase (289 aa).

Ser-50 serves as a coordination point for substrate. Residue Asp-88 coordinates Mg(2+). Substrate contacts are provided by Arg-159 and His-235.

It belongs to the isocitrate lyase/PEP mutase superfamily. Oxaloacetate decarboxylase family. Homotetramer; dimer of dimers. Mg(2+) serves as cofactor.

It carries out the reaction oxaloacetate + H(+) = pyruvate + CO2. Its function is as follows. Catalyzes the decarboxylation of oxaloacetate into pyruvate. Seems to play a role in maintaining cellular concentrations of bicarbonate and pyruvate. This Pseudomonas fluorescens (strain ATCC BAA-477 / NRRL B-23932 / Pf-5) protein is Oxaloacetate decarboxylase.